Reading from the N-terminus, the 212-residue chain is Adenylate kinase (212 aa).

10–15 serves as a coordination point for ATP; it reads GSGKGT. An NMP region spans residues 30-59; sequence STGDLMRKEINDETPLGIECARYMNEGRLV. Residues threonine 31, arginine 36, 57-59, and glutamine 90 each bind AMP; that span reads RLV. An LID region spans residues 124–161; that stretch reads GRLICPKCKVSYHIISRKPKLEGICDNDGTELVRRPDD. Arginine 125 serves as a coordination point for ATP. 2 residues coordinate Zn(2+): cysteine 128 and cysteine 131. 134-135 is a binding site for ATP; sequence SY. The Zn(2+) site is built by cysteine 148 and aspartate 151. Positions 158 and 169 each coordinate AMP. Asparagine 198 is an ATP binding site.

This sequence belongs to the adenylate kinase family. Monomer.

It is found in the cytoplasm. The catalysed reaction is AMP + ATP = 2 ADP. It functions in the pathway purine metabolism; AMP biosynthesis via salvage pathway; AMP from ADP: step 1/1. Its function is as follows. Catalyzes the reversible transfer of the terminal phosphate group between ATP and AMP. Plays an important role in cellular energy homeostasis and in adenine nucleotide metabolism. In Mesoplasma florum (strain ATCC 33453 / NBRC 100688 / NCTC 11704 / L1) (Acholeplasma florum), this protein is Adenylate kinase.